The following is a 321-amino-acid chain: Olfactory receptor 52P1 (321 aa).

The Extracellular segment spans residues 1–27 (MESPNHTDVDPSVFFLLGIPGLEQFHL). Residue Asn5 is glycosylated (N-linked (GlcNAc...) asparagine). Residues 28 to 48 (WLSLPVCGLGTATIVGNITIL) form a helical membrane-spanning segment. The Cytoplasmic segment spans residues 49 to 56 (VVVATEPV). Residues 57 to 77 (LHKPVYLFLCMLSTIDLAASV) traverse the membrane as a helical segment. Over 78 to 101 (STVPKLLAIFWCGAGHISASACLA) the chain is Extracellular. Cys99 and Cys191 are disulfide-bonded. The chain crosses the membrane as a helical span at residues 102 to 122 (QMFFIHAFCMMESTVLLAMAF). Over 123–141 (DRYVAICHPLRYATILTDT) the chain is Cytoplasmic. A helical membrane pass occupies residues 142–162 (IIAHIGVAAVVRGSLLMLPCP). Residues 163–198 (FLIGRLNFCQSHVILHTYCEHMAVVKLACGDTRPNR) lie on the Extracellular side of the membrane. Residues 199–219 (VYGLTAALLVIGVDLFCIGLS) form a helical membrane-spanning segment. At 220–239 (YALSAQAVLRLSSHEARSKA) the chain is on the cytoplasmic side. Residues 240 to 260 (LGTCGSHVCVILISYTPALFS) traverse the membrane as a helical segment. Residues 261 to 275 (FFTHRFGHHVPVHIH) are Extracellular-facing. The helical transmembrane segment at 276–296 (ILLANVYLLLPPALNPVVYGV) threads the bilayer. The Cytoplasmic segment spans residues 297-315 (KTKQIRKRVVRVFQSGQGM).

Belongs to the G-protein coupled receptor 1 family.

The protein localises to the cell membrane. Its function is as follows. Odorant receptor. The protein is Olfactory receptor 52P1 of Homo sapiens (Human).